A 1083-amino-acid chain; its full sequence is uncharacterized protein (1083 aa).

A disordered region spans residues 93 to 145 (SKGNLRYVPTTSRNPSNTDTYSSSIDISSSSSSINTSDDSSGKTSSNDLSDMS). Low complexity predominate over residues 108–145 (SNTDTYSSSIDISSSSSSINTSDDSSGKTSSNDLSDMS).

The protein resides in the virion. This is an uncharacterized protein from Acanthamoeba polyphaga (Amoeba).